The sequence spans 268 residues: Imidazole glycerol phosphate synthase subunit HisF (268 aa).

Residues Asp-12 and Asp-131 contribute to the active site.

This sequence belongs to the HisA/HisF family. Heterodimer of HisH and HisF.

It localises to the cytoplasm. It carries out the reaction 5-[(5-phospho-1-deoxy-D-ribulos-1-ylimino)methylamino]-1-(5-phospho-beta-D-ribosyl)imidazole-4-carboxamide + L-glutamine = D-erythro-1-(imidazol-4-yl)glycerol 3-phosphate + 5-amino-1-(5-phospho-beta-D-ribosyl)imidazole-4-carboxamide + L-glutamate + H(+). It participates in amino-acid biosynthesis; L-histidine biosynthesis; L-histidine from 5-phospho-alpha-D-ribose 1-diphosphate: step 5/9. Its function is as follows. IGPS catalyzes the conversion of PRFAR and glutamine to IGP, AICAR and glutamate. The HisF subunit catalyzes the cyclization activity that produces IGP and AICAR from PRFAR using the ammonia provided by the HisH subunit. The polypeptide is Imidazole glycerol phosphate synthase subunit HisF (Methanoculleus marisnigri (strain ATCC 35101 / DSM 1498 / JR1)).